A 260-amino-acid chain; its full sequence is Small ribosomal subunit protein uS3 (260 aa).

Positions 39 to 114 (LRQYIEQKLG…QIRINVVEVQ (76 aa)) constitute a KH type-2 domain. A disordered region spans residues 217–260 (GQEPDPLPPASRDRERDPRDRDREPRRRQQQRRRQQFEDRSNEG). Basic and acidic residues-rich tracts occupy residues 227 to 243 (SRDR…EPRR) and 251 to 260 (QQFEDRSNEG).

This sequence belongs to the universal ribosomal protein uS3 family. As to quaternary structure, part of the 30S ribosomal subunit. Forms a tight complex with proteins S10 and S14.

Functionally, binds the lower part of the 30S subunit head. Binds mRNA in the 70S ribosome, positioning it for translation. This chain is Small ribosomal subunit protein uS3, found in Nostoc punctiforme (strain ATCC 29133 / PCC 73102).